The primary structure comprises 743 residues: Envelope glycoprotein H (743 aa).

An N-terminal signal peptide occupies residues 1 to 23 (MRPGLPPYLTVFTVYLLSHLPSQ). Over 24-720 (RYGADAASEA…VVDATDSRLL (697 aa)) the chain is Virion surface. Residues Asn-56, Asn-63, Asn-68, and Asn-193 are each glycosylated (N-linked (GlcNAc...) asparagine; by host). An interaction with gL region spans residues 218 to 281 (YLMDELRYVK…QTEKHELLVL (64 aa)). Residues Asn-642 and Asn-701 are each glycosylated (N-linked (GlcNAc...) asparagine; by host). The helical transmembrane segment at 721 to 741 (MMSVYALSAIIGIYLLYRMLK) threads the bilayer. The Intravirion portion of the chain corresponds to 742-743 (TC).

The protein belongs to the herpesviridae glycoprotein H family. As to quaternary structure, interacts with glycoprotein L (gL); this interaction is necessary for the correct processing and cell surface expression of gH. The heterodimer gH/gL seems to interact with gB trimers during fusion. Forms the envelope pentamer complex (PC) composed of gH, gL, UL128, UL130, and UL131A. The pentamer interacts with host NRP2. Forms the envelope trimer complex composed of gH, gL, and gO. The trimer interacts with host PDGFRA. The trimer also interacts with host EPHA2. Interacts with UL116. Post-translationally, N-glycosylated, O-glycosylated, and sialylated.

It is found in the virion membrane. Its subcellular location is the host cell membrane. The protein resides in the host endosome membrane. The heterodimer glycoprotein H-glycoprotein L is required for the fusion of viral and plasma membranes leading to virus entry into the host cell. Following initial binding to host receptor, membrane fusion is mediated by the fusion machinery composed of gB and the heterodimer gH/gL. May also be involved in the fusion between the virion envelope and the outer nuclear membrane during virion morphogenesis. In human cytomegalovirus, forms two distincts complexes to mediate viral entry, a trimer and a pentamer at the surface of the virion envelope. The gH-gL-gO trimer is required for infection in fibroblasts by interacting with host PDGFRA, and in glioblastoma cells by interacting with host EPHA2. The gH-gL-UL128-UL130-UL131A pentamer is essential for viral entry in epithelial, endothelial and myeloid cells via interaction with host NRP2. The sequence is that of Envelope glycoprotein H from Human cytomegalovirus (strain AD169) (HHV-5).